The primary structure comprises 435 residues: NAD-specific glutamate dehydrogenase A (435 aa).

Positions 1–28 are disordered; that stretch reads MTMASKSDSTHDESGDEAADSTEPESAL. Acidic residues predominate over residues 14–23; the sequence is SGDEAADSTE. Lys126 is a catalytic residue.

This sequence belongs to the Glu/Leu/Phe/Val dehydrogenases family. Homohexamer. In terms of processing, the N-terminus is blocked.

It catalyses the reaction L-glutamate + NAD(+) + H2O = 2-oxoglutarate + NH4(+) + NADH + H(+). Its activity is regulated as follows. Inhibited by ethanol, acetone, acetonitrile and 2-propanol (65 to 70% inhibition) and to a lesser extent by methanol and dimethyl formamide (26 and 49 % inhibition respectively). No effect of glycerol or DMSO. This chain is NAD-specific glutamate dehydrogenase A (gdhX), found in Halobacterium salinarum (Halobacterium halobium).